Here is a 361-residue protein sequence, read N- to C-terminus: Protein RecA (361 aa).

Position 77 to 84 (77 to 84 (GPESSGKT)) interacts with ATP.

The protein belongs to the RecA family.

The protein resides in the cytoplasm. In terms of biological role, can catalyze the hydrolysis of ATP in the presence of single-stranded DNA, the ATP-dependent uptake of single-stranded DNA by duplex DNA, and the ATP-dependent hybridization of homologous single-stranded DNAs. It interacts with LexA causing its activation and leading to its autocatalytic cleavage. This Rhizobium etli protein is Protein RecA.